The following is a 378-amino-acid chain: L-asparaginase-like protein GF11609 (378 aa).

The N-terminal stretch at 1-21 is a signal peptide; the sequence is MCSPLPLLILRLLLLTHPSLG. 3 cysteine pairs are disulfide-bonded: Cys71–Cys76, Cys170–Cys186, and Cys325–Cys352.

It belongs to the Ntn-hydrolase family.

The sequence is that of L-asparaginase-like protein GF11609 from Drosophila ananassae (Fruit fly).